The chain runs to 505 residues: ATP synthase subunit alpha (505 aa).

ATP is bound at residue 169 to 176 (GDRKTGKT).

It belongs to the ATPase alpha/beta chains family. In terms of assembly, F-type ATPases have 2 components, CF(1) - the catalytic core - and CF(0) - the membrane proton channel. CF(1) has five subunits: alpha(3), beta(3), gamma(1), delta(1), epsilon(1). CF(0) has three main subunits: a(1), b(2) and c(9-12). The alpha and beta chains form an alternating ring which encloses part of the gamma chain. CF(1) is attached to CF(0) by a central stalk formed by the gamma and epsilon chains, while a peripheral stalk is formed by the delta and b chains.

The protein resides in the cell membrane. The catalysed reaction is ATP + H2O + 4 H(+)(in) = ADP + phosphate + 5 H(+)(out). In terms of biological role, produces ATP from ADP in the presence of a proton gradient across the membrane. The alpha chain is a regulatory subunit. The polypeptide is ATP synthase subunit alpha (Leuconostoc mesenteroides subsp. mesenteroides (strain ATCC 8293 / DSM 20343 / BCRC 11652 / CCM 1803 / JCM 6124 / NCDO 523 / NBRC 100496 / NCIMB 8023 / NCTC 12954 / NRRL B-1118 / 37Y)).